A 398-amino-acid polypeptide reads, in one-letter code: MIIKPRVRGFICVTTHPAGCEANVRQQIGYVKAKGPIADGPKRVLVIGASTGYGLAARITAAFGCGAGTLGVFFERPGSESKPGSPGWYNTAAFHRAAAQEGLYAKSINGDGFSDDVKQKTIDAIREDLGQVDLVVYSLAAPRRIHPKTGEVFNSTLKPIGKAVSLRGLDTDNEVVKDTVLEPATQKEIDDTVAVMGGEDWQMWIDALQAAGVLADGAKTTAFTYLGERITHDIYWNGSIGAAKKDLDQKVLGIRAGLAAKGGDARVSVLKAVVTQASSAIPVMPLYLSLLFKVMKAEGTHEGCIEQVHGLFADSLCGSAPHLDEEGRLRADYKELSPQVQARVTALWPQVTSQNVRELTDLAGYKAEFLRLFGFGIEGVDYEADVNPDVGIPNLVQA.

Residues 48–53, 74–75, 111–112, and 139–140 each bind NAD(+); these read GASTGY, FE, DG, and LA. Tyr225 serves as a coordination point for substrate. Tyr235 functions as the Proton donor in the catalytic mechanism. NAD(+) is bound by residues Lys244 and 273–275; that span reads VVT.

Belongs to the TER reductase family. In terms of assembly, monomer.

The enzyme catalyses a 2,3-saturated acyl-[ACP] + NAD(+) = a (2E)-enoyl-[ACP] + NADH + H(+). The protein operates within lipid metabolism; fatty acid biosynthesis. In terms of biological role, involved in the final reduction of the elongation cycle of fatty acid synthesis (FAS II). Catalyzes the reduction of a carbon-carbon double bond in an enoyl moiety that is covalently linked to an acyl carrier protein (ACP). This Variovorax paradoxus (strain S110) protein is Enoyl-[acyl-carrier-protein] reductase [NADH].